The chain runs to 77 residues: U8-lycotoxin-Ls1w (77 aa).

The N-terminal stretch at 1-20 (MKLIIFTGLVLFAIVSLIEA) is a signal peptide. The propeptide occupies 21-26 (QAENEK).

This sequence belongs to the neurotoxin 19 (CSTX) family. 08 (U8-Lctx) subfamily. Post-translationally, contains 4 disulfide bonds. In terms of tissue distribution, expressed by the venom gland.

It is found in the secreted. This Lycosa singoriensis (Wolf spider) protein is U8-lycotoxin-Ls1w.